Reading from the N-terminus, the 401-residue chain is Solute carrier family 22 member 17 (401 aa).

A run of 10 helical transmembrane segments spans residues 10 to 30 (GIVL…AAAG), 35 to 55 (IMAL…GVYL), 69 to 89 (VALA…GLAL), 100 to 120 (MITA…FLES), 184 to 203 (NIWK…HAIR), 218 to 238 (FYLC…FLGV), 247 to 267 (GILL…LGLW), 277 to 297 (TFSV…TLLA), 309 to 329 (GLGL…AQRL), and 336 to 356 (FLQH…IMLL).

This sequence belongs to the major facilitator (TC 2.A.1) superfamily. Organic cation transporter (TC 2.A.1.19) family. Widely expressed.

It is found in the cell membrane. It localises to the vacuole membrane. Functionally, cell surface receptor for LCN2 (24p3) that plays a key role in iron homeostasis and transport. Able to bind iron-bound LCN2 (holo-24p3), followed by internalization of holo-24p3 and release of iron, thereby increasing intracellular iron concentration and leading to inhibition of apoptosis. Also binds iron-free LCN2 (apo-24p3), followed by internalization of apo-24p3 and its association with an intracellular siderophore, leading to iron chelation and iron transfer to the extracellular medium, thereby reducing intracellular iron concentration and resulting in apoptosis. This is Solute carrier family 22 member 17 (Slc22a17) from Mus musculus (Mouse).